The primary structure comprises 453 residues: Trigger factor (453 aa).

The PPIase FKBP-type domain maps to 171–256 (GDRVTVSFKG…ATLVEAPKDT (86 aa)).

Belongs to the FKBP-type PPIase family. Tig subfamily.

It localises to the cytoplasm. It carries out the reaction [protein]-peptidylproline (omega=180) = [protein]-peptidylproline (omega=0). Functionally, involved in protein export. Acts as a chaperone by maintaining the newly synthesized protein in an open conformation. Functions as a peptidyl-prolyl cis-trans isomerase. This Rhodopseudomonas palustris (strain BisA53) protein is Trigger factor.